We begin with the raw amino-acid sequence, 340 residues long: L-threonine 3-dehydrogenase (340 aa).

Residue C38 participates in Zn(2+) binding. Catalysis depends on charge relay system residues T40 and H43. 6 residues coordinate Zn(2+): H63, E64, C93, C96, C99, and C107. Residues I175, D195, R200, 261–263, and 285–286 each bind NAD(+); these read LGI and IY.

It belongs to the zinc-containing alcohol dehydrogenase family. As to quaternary structure, homotetramer. Zn(2+) is required as a cofactor.

It is found in the cytoplasm. The catalysed reaction is L-threonine + NAD(+) = (2S)-2-amino-3-oxobutanoate + NADH + H(+). It participates in amino-acid degradation; L-threonine degradation via oxydo-reductase pathway; glycine from L-threonine: step 1/2. In terms of biological role, catalyzes the NAD(+)-dependent oxidation of L-threonine to 2-amino-3-ketobutyrate. This is L-threonine 3-dehydrogenase from Stenotrophomonas maltophilia (strain K279a).